The primary structure comprises 419 residues: Double-stranded RNA-binding protein 1 (419 aa).

2 consecutive DRBM domains span residues 15-84 and 101-170; these read VFKS…ELAK and LCKN…AIQS. Residues 207–222 carry the Bipartite nuclear localization motif; that stretch reads KARKAQFKKKAQKGKR. A run of 6 repeats spans residues 247–274, 275–302, 303–330, 331–358, 359–386, and 387–414. The segment at 247–414 is 6 X 28 AA repeats of E-K-I-E-T-T-P-N-L-E-[PS]-[PS]-S-C-M-[NS]-G-L-K-E-A-A-F-G-S-V-E-T; the sequence is EKIETTPNLE…KEAAFGSVET (168 aa).

Homodimer. Heterodimer with DRB2, DRB4 or DRB5. Interacts with SE and DCL1. Interacts with RCF3, RS40 and RS41. As to expression, expressed in rosette and cauline leaves, stems, roots, flowers and siliques.

Its subcellular location is the nucleus. The protein resides in the nucleus speckle. Double-stranded RNA-binding protein involved in RNA-mediated post-transcriptional gene silencing (PTGS). Functions in the microRNAs (miRNAs) biogenesis by assisting DICER-LIKE 1 (DCL1) in the accurate processing from primary miRNAs (pri-miRNAs) to miRNAs in the nucleus. Forms a complex with SERRATE (SE) and DCL1 to promote accurate processing of pri-miRNAs by DCL1. Binds and assist DCL1 for accurate processing of precursor miRNAs (pre-miRNA). Indirectly involved in the production of trans-acting small interfering RNAs (ta-siRNAs) derived from the TAS1, TAS2 or TAS3 endogenous transcripts by participating in the production of their initiating miRNAs. Involved with argonaute 1 (AGO1) in the guide strand selection from miRNA duplexes, presumably by directional loading of the miRNA duplex (guide stand and passenger strand) onto the RNA-induced silencing complex (RISC) for passenger strand degradation. Does not participate in sense transgene-induced post-transcriptional gene silencing (S-PTGS). Involved in several plant development aspects and response to hormones through its role in miRNAs processing. The protein is Double-stranded RNA-binding protein 1 (DRB1) of Arabidopsis thaliana (Mouse-ear cress).